Reading from the N-terminus, the 893-residue chain is 26S proteasome non-ATPase regulatory subunit 2 (893 aa).

The disordered stretch occupies residues 1 to 59 (MPQKEVTIPVPAKGGSNKEEDKKDNKDTEEKNTTTNTTTKDNKKDKKKDKKEETLSPED). 2 stretches are compositionally biased toward basic and acidic residues: residues 16-32 (SNKEEDKKDNKDTEEKN) and 40-59 (KDNKKDKKKDKKEETLSPED). 7 PC repeats span residues 412–445 (STVASTGMVVLWDIDGGLTKIDKFLYSQEKHCSN), 446–482 (GALMAIGMLTSGIRSEMDPALSLLAEHINSSNTGTRI), 483–517 (SAIFGLGLAYAGTQRQDLMSLLSPCLDDDKEKMEF), 522–555 (GLALGLIFIGSCDPELSTLFVQTLIQRGTAASES), 562–583 (LGLGLLYLGKQDAAELALETLK), 666–700 (AIPLALGLLSPSNPRIAIMDILSKLSHDNDPEVAQ), and 701–735 (GAILSLGLIGAGTNNARIGGMLRALAVFYGKDVHL).

Belongs to the proteasome subunit S2 family.

Its function is as follows. Acts as a regulatory subunit of the 26 proteasome which is involved in the ATP-dependent degradation of ubiquitinated proteins. In Dictyostelium discoideum (Social amoeba), this protein is 26S proteasome non-ATPase regulatory subunit 2 (psmD2).